Here is a 385-residue protein sequence, read N- to C-terminus: Beta sliding clamp (385 aa).

The protein belongs to the beta sliding clamp family. As to quaternary structure, forms a ring-shaped head-to-tail homodimer around DNA which binds and tethers DNA polymerases and other proteins to the DNA. The DNA replisome complex has a single clamp-loading complex (3 tau and 1 each of delta, delta', psi and chi subunits) which binds 3 Pol III cores (1 core on the leading strand and 2 on the lagging strand) each with a beta sliding clamp dimer. Additional proteins in the replisome are other copies of gamma, psi and chi, Ssb, DNA helicase and RNA primase.

Its subcellular location is the cytoplasm. Its function is as follows. Confers DNA tethering and processivity to DNA polymerases and other proteins. Acts as a clamp, forming a ring around DNA (a reaction catalyzed by the clamp-loading complex) which diffuses in an ATP-independent manner freely and bidirectionally along dsDNA. Initially characterized for its ability to contact the catalytic subunit of DNA polymerase III (Pol III), a complex, multichain enzyme responsible for most of the replicative synthesis in bacteria; Pol III exhibits 3'-5' exonuclease proofreading activity. The beta chain is required for initiation of replication as well as for processivity of DNA replication. The protein is Beta sliding clamp (dnaN) of Borreliella burgdorferi (strain ATCC 35210 / DSM 4680 / CIP 102532 / B31) (Borrelia burgdorferi).